Consider the following 382-residue polypeptide: Na(+)/H(+) antiporter NhaA 2 (382 aa).

11 helical membrane passes run 7–27 (MVLSETFPGILLIFFTFLALL), 58–78 (LDLWINDGLIAIFFLCIGLEL), 94–114 (SLPIFGALGGMITPALIFIAI), 124–144 (GWAIPTATDIAFAVGILMLLG), 153–173 (LFLLSLAIFDDLGAIVIIALF), 178–198 (LSALAIIICLFCIFALLLLNY), 199–219 (YHITHLSLYVLVGVVLWIAML), 255–275 (NPWVVYFILPLFAFANAGIDI), 291–311 (IILGLFLGKQLGVFTFCFIAI), 327–347 (FYGICILTGIGFTMSLFIDGL), and 361–381 (LAILVASFLSAIVGFIYLKIV).

Belongs to the NhaA Na(+)/H(+) (TC 2.A.33) antiporter family.

It localises to the cell inner membrane. The enzyme catalyses Na(+)(in) + 2 H(+)(out) = Na(+)(out) + 2 H(+)(in). Its function is as follows. Na(+)/H(+) antiporter that extrudes sodium in exchange for external protons. This chain is Na(+)/H(+) antiporter NhaA 2, found in Campylobacter jejuni (strain RM1221).